The chain runs to 134 residues: Complexin-1 (134 aa).

Disordered stretches follow at residues 1 to 60 (MEFV…AERE) and 74 to 113 (KKEE…EEED). Residues 15–60 (DMGKMLGGDEEKDPDAAKKEEERQEALRQAEEERKAKYAKMEAERE) are compositionally biased toward basic and acidic residues. Residues 29–69 (DAAKKEEERQEALRQAEEERKAKYAKMEAEREAVRQGIRDK) adopt a coiled-coil conformation. An interaction with the SNARE complex region spans residues 48 to 70 (RKAKYAKMEAEREAVRQGIRDKY).

This sequence belongs to the complexin/synaphin family. In terms of assembly, binds to the SNARE core complex containing SNAP25, VAMP2 and STX1A. Nervous system. In hippocampus and cerebellum, expressed mainly by inhibitory neurons. Overexpressed in substantia nigra from patients with Parkinson disease.

Its subcellular location is the cytoplasm. It localises to the cytosol. The protein resides in the perikaryon. The protein localises to the presynapse. In terms of biological role, positively regulates a late step in exocytosis of various cytoplasmic vesicles, such as synaptic vesicles and other secretory vesicles. Organizes the SNAREs into a cross-linked zigzag topology that, when interposed between the vesicle and plasma membranes, is incompatible with fusion, thereby preventing SNAREs from releasing neurotransmitters until an action potential arrives at the synapse. Also involved in glucose-induced secretion of insulin by pancreatic beta-cells. Essential for motor behavior. This chain is Complexin-1 (CPLX1), found in Homo sapiens (Human).